Reading from the N-terminus, the 86-residue chain is Bacteriocin thailandicin (86 aa).

The segment at residues 23 to 86 (LTANLGISSY…KYGAKYSAAW (64 aa)) is a cross-link (cyclopeptide (Leu-Trp)).

It localises to the secreted. Its function is as follows. Cyclopeptide antibiotic with bacteriolytic activity against the Gram-positive bacteria S.aureus and S.thermophilus, and lower activity against the Gram-negative bacteria E.coli and P.aeruginosa. In Enterococcus thailandicus, this protein is Bacteriocin thailandicin.